The primary structure comprises 523 residues: GMP synthase [glutamine-hydrolyzing] (523 aa).

The 198-residue stretch at 8 to 205 folds into the Glutamine amidotransferase type-1 domain; sequence KILILDFGSQ…VENICGCARS (198 aa). C85 acts as the Nucleophile in catalysis. Active-site residues include H179 and E181. The GMPS ATP-PPase domain occupies 206-398; the sequence is WTPENIIEDA…LGLPAEMLNR (193 aa). An ATP-binding site is contributed by 233-239; that stretch reads SGGVDSS.

Homodimer.

It catalyses the reaction XMP + L-glutamine + ATP + H2O = GMP + L-glutamate + AMP + diphosphate + 2 H(+). It participates in purine metabolism; GMP biosynthesis; GMP from XMP (L-Gln route): step 1/1. In terms of biological role, catalyzes the synthesis of GMP from XMP. The sequence is that of GMP synthase [glutamine-hydrolyzing] from Haemophilus ducreyi (strain 35000HP / ATCC 700724).